Reading from the N-terminus, the 604-residue chain is Elongation factor 4 (604 aa).

Residues 7–189 (SRLRNFCIIA…AVVDRIPPPA (183 aa)) enclose the tr-type G domain. GTP-binding positions include 19-24 (DHGKST) and 136-139 (NKID).

It belongs to the TRAFAC class translation factor GTPase superfamily. Classic translation factor GTPase family. LepA subfamily.

The protein localises to the cell inner membrane. It carries out the reaction GTP + H2O = GDP + phosphate + H(+). Required for accurate and efficient protein synthesis under certain stress conditions. May act as a fidelity factor of the translation reaction, by catalyzing a one-codon backward translocation of tRNAs on improperly translocated ribosomes. Back-translocation proceeds from a post-translocation (POST) complex to a pre-translocation (PRE) complex, thus giving elongation factor G a second chance to translocate the tRNAs correctly. Binds to ribosomes in a GTP-dependent manner. The polypeptide is Elongation factor 4 (Prochlorococcus marinus (strain MIT 9313)).